We begin with the raw amino-acid sequence, 187 residues long: Peptide deformylase 1 (187 aa).

Residues Cys-107 and His-149 each contribute to the Fe cation site. The active site involves Glu-150. His-153 is a binding site for Fe cation.

Belongs to the polypeptide deformylase family. The cofactor is Fe(2+).

The catalysed reaction is N-terminal N-formyl-L-methionyl-[peptide] + H2O = N-terminal L-methionyl-[peptide] + formate. Removes the formyl group from the N-terminal Met of newly synthesized proteins. Requires at least a dipeptide for an efficient rate of reaction. N-terminal L-methionine is a prerequisite for activity but the enzyme has broad specificity at other positions. The polypeptide is Peptide deformylase 1 (Nostoc sp. (strain PCC 7120 / SAG 25.82 / UTEX 2576)).